Consider the following 398-residue polypeptide: MARSGPEVADIFRRYGEAYRAQHTSLSTAQRRVMTAIELCRTAALGGHVEACDQCGHRRIAFNSCRDRHCPRCQSLARAQWLEDRRAELLETQYFHVVFTLPEAIAAIAYQNKALVYGLLFRATAETLRTIAADPRHLGAEIGFFAVLHTWGQNLLHHPHLHCVVPGGGFSPDGTQWIACKPGFFLPVRVLSRLFRRLFLEHLEKAFDGGKLQFFSDLRALNERNAFRRYLAPLRKAEWVVFAKPPFAGPEQVLDYVGRYTHRVAISNNRLVDIEDGAVRFRWKDYRHGDRQKVMTVSTDEFIRRFLLHVLPEGFHRIRYYGFLGNRYREQKLAQCRDLLGMSVPAPSETQAPKEYRDRYEELTGRSLRQCPACHQGQMITIEIFDGVTGPPRCWDTS.

The protein belongs to the transposase 32 family.

In Sinorhizobium fredii (strain NBRC 101917 / NGR234), this protein is Putative transposase y4qJ.